A 377-amino-acid polypeptide reads, in one-letter code: N-acetylgalactosamine-6-phosphate deacetylase (377 aa).

Glutamate 125 is a binding site for a divalent metal cation. 136–137 (AH) is a binding site for substrate. A divalent metal cation-binding residues include histidine 191 and histidine 212. Substrate-binding positions include 215–216 (NG), arginine 223, and 244–247 (DGHH). Aspartate 269 acts as the Proton donor/acceptor in catalysis. 302–304 (LAG) is a substrate binding site.

This sequence belongs to the metallo-dependent hydrolases superfamily. NagA family. A divalent metal cation is required as a cofactor.

The enzyme catalyses N-acetyl-D-galactosamine 6-phosphate + H2O = D-galactosamine 6-phosphate + acetate. Its function is as follows. Catalyzes the deacetylation of N-acetyl-D-galactosamine 6-phosphate to D-galactosamine 6-phosphate. Can probably also catalyze the deacetylation of N-acetyl-D-glucosamine 6-phosphate to D-glucosamine 6-phosphate. This chain is N-acetylgalactosamine-6-phosphate deacetylase (agaA), found in Escherichia coli O157:H7.